Reading from the N-terminus, the 436-residue chain is Transcription termination factor Rho (436 aa).

Positions 65-140 constitute a Rho RNA-BD domain; it reads LVFVKGVLEI…IRMESVNGLP (76 aa). ATP is bound by residues 185-190, 197-202, and Arg-228; these read GKGQRG and KAGKTV.

Belongs to the Rho family. Homohexamer. The homohexamer assembles into an open ring structure.

Functionally, facilitates transcription termination by a mechanism that involves Rho binding to the nascent RNA, activation of Rho's RNA-dependent ATPase activity, and release of the mRNA from the DNA template. This Aquifex aeolicus (strain VF5) protein is Transcription termination factor Rho.